The chain runs to 1584 residues: Cilia- and flagella-associated protein 74 (1584 aa).

Residues 300-379 (RKFQAWDRAK…EAEEEKRKKQ (80 aa)) adopt a coiled-coil conformation. Polar residues predominate over residues 692 to 706 (SEQQLEGTESSQADM). Residues 692–739 (SEQQLEGTESSQADMQSRKELEKLDKEQEEEQPAEPERLTTVIPPSEE) form a disordered region. Basic and acidic residues predominate over residues 707 to 717 (QSRKELEKLDK).

It belongs to the CFAP74 family.

It localises to the cytoplasm. Its subcellular location is the cytoskeleton. The protein localises to the cilium axoneme. The protein resides in the flagellum axoneme. Its function is as follows. As part of the central apparatus of the cilium axoneme may play a role in cilium movement. May play an important role in sperm architecture and function. The polypeptide is Cilia- and flagella-associated protein 74 (Homo sapiens (Human)).